A 102-amino-acid chain; its full sequence is MINSSDFSRSSAQIIKYPIITDKATRLLENNQYSFVVDRYSNKITIKSAIEYLFNVKVIKINTCRLPRKQKRVGKYVGWKPQYKKAIVTLSEGDIINLFTDS.

This sequence belongs to the universal ribosomal protein uL23 family. As to quaternary structure, part of the 50S ribosomal subunit.

The protein localises to the plastid. It localises to the chloroplast. Its function is as follows. Binds to 23S rRNA. The polypeptide is Large ribosomal subunit protein uL23c (rpl23) (Phaeodactylum tricornutum (strain CCAP 1055/1)).